Consider the following 662-residue polypeptide: Probable quinol oxidase subunit 1 (662 aa).

The next 2 membrane-spanning stretches (helical) occupy residues 14–34 (WMIT…IAVI) and 58–78 (LMYL…ALLL). Position 102 (H102) interacts with Fe(II)-heme a. The next 8 helical transmembrane spans lie at 103–123 (GVIM…NVVV), 140–160 (ISFW…IIGG), 187–207 (VAIQ…FVTI), 228–248 (FITT…LALM), 273–293 (FFWV…FGIY), 311–331 (MVWA…HHFF), 336–356 (GALI…PTGV), and 376–396 (MLFS…GVML). Positions 279, 283, 328, and 329 each coordinate Cu cation. The segment at residues 279–283 (HPEVY) is a cross-link (1'-histidyl-3'-tyrosine (His-Tyr)). H414 provides a ligand contact to heme a3. The next 5 helical transmembrane spans lie at 415-435 (FHYT…IFWY), 451-471 (CFWL…ILGL), 492-512 (VIST…VVSI), 586-605 (THTG…FLIF), and 609-628 (IPAA…QSFV). Residue H416 coordinates Fe(II)-heme a.

The protein belongs to the heme-copper respiratory oxidase family. Cu cation serves as cofactor. It depends on ferriheme a as a cofactor. The cofactor is Heme A3..

It localises to the cell membrane. The enzyme catalyses 2 a quinol + O2 = 2 a quinone + 2 H2O. Its pathway is energy metabolism; oxidative phosphorylation. Its function is as follows. Catalyzes quinol oxidation with the concomitant reduction of oxygen to water. The sequence is that of Probable quinol oxidase subunit 1 (qoxB) from Staphylococcus haemolyticus (strain JCSC1435).